A 318-amino-acid chain; its full sequence is Olfactory receptor 2T34 (318 aa).

Over 1-30 (MCSGNQTSQNQTASTDFTLTGLFAESKHAA) the chain is Extracellular. Asn5 and Asn10 each carry an N-linked (GlcNAc...) asparagine glycan. A helical membrane pass occupies residues 31-54 (LLYTVTFLLFLMALTGNALLILLI). Over 55–62 (HSEPRLHT) the chain is Cytoplasmic. Residues 63-84 (PMYFFISQLALMDLMYLCVTVP) traverse the membrane as a helical segment. Residues 85-105 (KMLVGQVTGDDTISPSGCGIQ) lie on the Extracellular side of the membrane. Cys102 and Cys194 form a disulfide bridge. Residues 106-125 (MFFHLTLAGAEVFLLAAMAY) traverse the membrane as a helical segment. Over 126 to 144 (DRYAAVCRPLHYPLLMNQR) the chain is Cytoplasmic. Residues 145–163 (VCQLLVSACWVLGMVDGLL) form a helical membrane-spanning segment. Over 164–200 (LTPITMSFPFCQSRKILSFFCETPALLKLSCSDVSLY) the chain is Extracellular. The helical transmembrane segment at 201-224 (KMLTYLCCILMLLTPIMVISSSYT) threads the bilayer. Topologically, residues 225 to 241 (LILHLIHRMNSAAGRRK) are cytoplasmic. Residues 242 to 264 (ALATCSSHMIIVLLLFGASFYTY) form a helical membrane-spanning segment. At 265–277 (MLRSSYHTAEQDM) the chain is on the extracellular side. The helical transmembrane segment at 278 to 297 (MVSAFYTIFTPVLNPLIYSL) threads the bilayer. At 298–318 (RNKDVTRALRSMMQSRMNQEK) the chain is on the cytoplasmic side.

This sequence belongs to the G-protein coupled receptor 1 family.

Its subcellular location is the cell membrane. In terms of biological role, odorant receptor. This Homo sapiens (Human) protein is Olfactory receptor 2T34 (OR2T34).